The primary structure comprises 504 residues: Probable cytosol aminopeptidase (504 aa).

Mn(2+)-binding residues include Lys-268 and Asp-273. The active site involves Lys-280. Asp-291, Asp-350, and Glu-352 together coordinate Mn(2+). Residue Arg-354 is part of the active site.

The protein belongs to the peptidase M17 family. Requires Mn(2+) as cofactor.

It localises to the cytoplasm. It carries out the reaction Release of an N-terminal amino acid, Xaa-|-Yaa-, in which Xaa is preferably Leu, but may be other amino acids including Pro although not Arg or Lys, and Yaa may be Pro. Amino acid amides and methyl esters are also readily hydrolyzed, but rates on arylamides are exceedingly low.. It catalyses the reaction Release of an N-terminal amino acid, preferentially leucine, but not glutamic or aspartic acids.. Presumably involved in the processing and regular turnover of intracellular proteins. Catalyzes the removal of unsubstituted N-terminal amino acids from various peptides. This is Probable cytosol aminopeptidase from Psychromonas ingrahamii (strain DSM 17664 / CCUG 51855 / 37).